We begin with the raw amino-acid sequence, 235 residues long: Ubiquinone biosynthesis O-methyltransferase (235 aa).

The S-adenosyl-L-methionine site is built by R39, G59, D80, and M124.

The protein belongs to the methyltransferase superfamily. UbiG/COQ3 family.

It carries out the reaction a 3-demethylubiquinol + S-adenosyl-L-methionine = a ubiquinol + S-adenosyl-L-homocysteine + H(+). The catalysed reaction is a 3-(all-trans-polyprenyl)benzene-1,2-diol + S-adenosyl-L-methionine = a 2-methoxy-6-(all-trans-polyprenyl)phenol + S-adenosyl-L-homocysteine + H(+). Its pathway is cofactor biosynthesis; ubiquinone biosynthesis. O-methyltransferase that catalyzes the 2 O-methylation steps in the ubiquinone biosynthetic pathway. This is Ubiquinone biosynthesis O-methyltransferase from Vibrio parahaemolyticus serotype O3:K6 (strain RIMD 2210633).